Reading from the N-terminus, the 1149-residue chain is Bone sialoprotein-binding protein (1149 aa).

An N-terminal signal peptide occupies residues 1–52 (MINRDNKKAITKKGMISNRLNKFSIRKYTVGTASILVGTTLIFGLGNQEAKA). The segment at 53–601 (AENTSTENAK…GDGTVKPEEK (549 aa)) is ligand binding A region. Disordered regions lie at residues 54 to 249 (ENTS…TAPT) and 675 to 697 (LPTK…VTVK). A compositionally biased stretch (basic and acidic residues) spans 61-75 (AKQDEASASDNKEVV). Positions 77-89 (ETENNSTQKNDLT) are enriched in polar residues. Positions 92–106 (IKKETNTDSHQEAKE) are enriched in basic and acidic residues. The segment covering 109 to 126 (TTSSTQQQQNNATTSTET) has biased composition (low complexity). A compositionally biased stretch (basic and acidic residues) spans 130 to 145 (NIEKENVKPSTDKTAT). The segment covering 158-205 (PNNTNNDVTTKPSTSEIQTTPTTPQESTNIENSQPQPTPSKVDNQVTD) has biased composition (polar residues). Residues 216–241 (SKEELKNNPEKLKELVRNDSNTDRST) show a composition bias toward basic and acidic residues. CNA-B domains are found at residues 602–714 (LYKI…YKEP), 715–824 (KYNL…YKTP), and 825–935 (KYSL…EEDT). Residues 896-1124 (TQTGTNTTED…TGSENNGSNN (229 aa)) form a disordered region. Composition is skewed to acidic residues over residues 903–913 (TEDDKDADGGE) and 930–1088 (YFEE…DSDS). An LPXTG sorting signal motif is present at residues 1112 to 1116 (LPETG). Threonine 1115 is modified (pentaglycyl murein peptidoglycan amidated threonine). A propeptide spans 1116–1149 (GSENNGSNNATLFGGLFAALGSLLLFGRRKKQNK) (removed by sortase).

The protein belongs to the serine-aspartate repeat-containing protein (SDr) family.

Its subcellular location is the secreted. The protein resides in the cell wall. Specifically interacts with bone sialoprotein (BSP), a glycoprotein of bone and dentin extracellular matrix. Could contribute to staphylococcal osteomyelitis and arthritis. This Staphylococcus aureus protein is Bone sialoprotein-binding protein (bbp).